We begin with the raw amino-acid sequence, 283 residues long: MDLIAFANTFPRVWLLALLLLGLIIGSFLNVVIYRLPLMLERSWRQEARFHLGLPAGRPLARYDLCWPPSSCPHCHQRLRMRDNIPLLSWIWLRGRAHCCGGAVSWRYPLIELLSGLSFLLAGLLWQPGLALLGALLCFGIFVALAAIDARTQLLPDVMTLPLLWGGLLFNLADTFVPLEQAVVGAVAGYLSLWLIYWAFRLLSGREALGHGDFKLLAALGAWLGWQALPNLVLIASLTGLTATLLWQRIHRLSMQQPLAFGPWLAVSGAMGLVLNVLGGWSH.

7 helical membrane-spanning segments follow: residues 13-33, 106-126, 128-148, 153-173, 176-196, 216-236, and 259-279; these read VWLL…NVVI, WRYP…GLLW, PGLA…LAAI, QLLP…FNLA, FVPL…LWLI, LLAA…VLIA, and LAFG…NVLG.

The protein belongs to the peptidase A24 family.

It is found in the cell inner membrane. It catalyses the reaction Typically cleaves a -Gly-|-Phe- bond to release an N-terminal, basic peptide of 5-8 residues from type IV prepilin, and then N-methylates the new N-terminal amino group, the methyl donor being S-adenosyl-L-methionine.. Its function is as follows. Plays a role in type II pseudopili formation by proteolytically removing the leader sequence from substrate proteins and subsequently monomethylating the alpha-amino group of the newly exposed N-terminal phenylalanine. Substrates include proteins required for biogenesis of the type II general secretory apparatus. The chain is Prepilin leader peptidase/N-methyltransferase (outO) from Dickeya chrysanthemi (Pectobacterium chrysanthemi).